The primary structure comprises 449 residues: Na(+)-translocating NADH-quinone reductase subunit A (449 aa).

Belongs to the NqrA family. As to quaternary structure, composed of six subunits; NqrA, NqrB, NqrC, NqrD, NqrE and NqrF.

The catalysed reaction is a ubiquinone + n Na(+)(in) + NADH + H(+) = a ubiquinol + n Na(+)(out) + NAD(+). In terms of biological role, NQR complex catalyzes the reduction of ubiquinone-1 to ubiquinol by two successive reactions, coupled with the transport of Na(+) ions from the cytoplasm to the periplasm. NqrA to NqrE are probably involved in the second step, the conversion of ubisemiquinone to ubiquinol. This Actinobacillus pleuropneumoniae serotype 5b (strain L20) protein is Na(+)-translocating NADH-quinone reductase subunit A.